The chain runs to 467 residues: UDP-N-acetylmuramate--L-alanine ligase (467 aa).

Position 112-118 (112-118) interacts with ATP; it reads GTHGKTT.

Belongs to the MurCDEF family.

The protein resides in the cytoplasm. It carries out the reaction UDP-N-acetyl-alpha-D-muramate + L-alanine + ATP = UDP-N-acetyl-alpha-D-muramoyl-L-alanine + ADP + phosphate + H(+). It functions in the pathway cell wall biogenesis; peptidoglycan biosynthesis. In terms of biological role, cell wall formation. The chain is UDP-N-acetylmuramate--L-alanine ligase from Polaromonas sp. (strain JS666 / ATCC BAA-500).